The chain runs to 447 residues: Gamma-glutamyl phosphate reductase (447 aa).

It belongs to the gamma-glutamyl phosphate reductase family.

Its subcellular location is the cytoplasm. The enzyme catalyses L-glutamate 5-semialdehyde + phosphate + NADP(+) = L-glutamyl 5-phosphate + NADPH + H(+). It participates in amino-acid biosynthesis; L-proline biosynthesis; L-glutamate 5-semialdehyde from L-glutamate: step 2/2. Catalyzes the NADPH-dependent reduction of L-glutamate 5-phosphate into L-glutamate 5-semialdehyde and phosphate. The product spontaneously undergoes cyclization to form 1-pyrroline-5-carboxylate. The sequence is that of Gamma-glutamyl phosphate reductase from Methanosarcina acetivorans (strain ATCC 35395 / DSM 2834 / JCM 12185 / C2A).